Reading from the N-terminus, the 702-residue chain is Phosphate acetyltransferase (702 aa).

The phosphate acetyltransferase stretch occupies residues 375–702 (AFRYELIQRA…QATQSAADCG (328 aa)).

In the N-terminal section; belongs to the CobB/CobQ family. It in the C-terminal section; belongs to the phosphate acetyltransferase and butyryltransferase family. Homohexamer.

Its subcellular location is the cytoplasm. It catalyses the reaction acetyl-CoA + phosphate = acetyl phosphate + CoA. It participates in metabolic intermediate biosynthesis; acetyl-CoA biosynthesis; acetyl-CoA from acetate: step 2/2. Involved in acetate metabolism. The chain is Phosphate acetyltransferase (pta) from Deinococcus radiodurans (strain ATCC 13939 / DSM 20539 / JCM 16871 / CCUG 27074 / LMG 4051 / NBRC 15346 / NCIMB 9279 / VKM B-1422 / R1).